Here is a 507-residue protein sequence, read N- to C-terminus: Maturase K (507 aa).

It belongs to the intron maturase 2 family. MatK subfamily.

The protein localises to the plastid. It is found in the chloroplast. Its function is as follows. Usually encoded in the trnK tRNA gene intron. Probably assists in splicing its own and other chloroplast group II introns. The polypeptide is Maturase K (Lens ervoides (Beaded lentil)).